A 251-amino-acid polypeptide reads, in one-letter code: Probable aquaporin TIP4-1 (251 aa).

A run of 2 helical transmembrane segments spans residues 26-46 and 57-77; these read LVLT…AGVP and ALAG…TAGF. Residues 85–87 carry the NPA 1 motif; the sequence is NPA. 3 consecutive transmembrane segments (helical) span residues 104–124, 144–164, and 170–190; these read ALYV…LRYL, GLVM…ATIL, and VPGF…IAGG. The NPA 2 signature appears at 198–200; that stretch reads NPA. A helical transmembrane segment spans residues 219-239; sequence WLGPLIGGPLAGLVYESLFLV.

Belongs to the MIP/aquaporin (TC 1.A.8) family. TIP (TC 1.A.8.10) subfamily. In terms of tissue distribution, expressed in roots, leaves and anthers.

The protein resides in the vacuole membrane. In terms of biological role, aquaporins facilitate the transport of water and small neutral solutes across cell membranes. May be involved in transport from the vacuolar compartment to the cytoplasm. The protein is Probable aquaporin TIP4-1 (TIP4-1) of Oryza sativa subsp. japonica (Rice).